The sequence spans 739 residues: Transcription activator of gluconeogenesis MCYG_04674 (739 aa).

Over residues 1–33 (MSPHQTTGQESDNMAVNGENAQASSQYIQLNSE) the composition is skewed to polar residues. The interval 1-62 (MSPHQTTGQE…PSRPKRKKAK (62 aa)) is disordered. Basic and acidic residues predominate over residues 40-55 (AAEKKAAAAKAKDPSR). Residues 65 to 93 (CYACQRGHLTCGDERPCQRCIKRGFQDAC) constitute a DNA-binding region (zn(2)-C6 fungal-type). 5 disordered regions span residues 174 to 223 (GPEN…QFNS), 264 to 308 (DTPP…GDSG), 380 to 420 (SRQN…HKNA), 537 to 574 (NHNVNTGGSSGLLTGSTSRGSYTPRPYSSDQFNSSTTA), and 639 to 668 (AQNNEVGSGEANELNSSSNGTTSTGRGQRR). Polar residues-rich tracts occupy residues 267–284 (PSDNGAQRGSIGQNSSGT) and 397–411 (PVVSTPQLKQQNLNI). A compositionally biased stretch (low complexity) spans 547-557 (GLLTGSTSRGS). The segment covering 562 to 574 (PYSSDQFNSSTTA) has biased composition (polar residues). Residues 653–664 (NSSSNGTTSTGR) are compositionally biased toward low complexity.

Belongs to the ERT1/acuK family.

The protein resides in the nucleus. Functionally, transcription factor which regulates nonfermentable carbon utilization. Activator of gluconeogenetic genes. The polypeptide is Transcription activator of gluconeogenesis MCYG_04674 (Arthroderma otae (strain ATCC MYA-4605 / CBS 113480) (Microsporum canis)).